The sequence spans 181 residues: Putative NAD(P)H-dependent FMN-containing oxidoreductase YwqN (181 aa).

It belongs to the SsuE family. The cofactor is FMN.

In terms of biological role, putative NADPH-dependent oxidoreductase. The chain is Putative NAD(P)H-dependent FMN-containing oxidoreductase YwqN (ywqN) from Bacillus subtilis (strain 168).